We begin with the raw amino-acid sequence, 344 residues long: Putative cyclin-Y-like protein 3 (344 aa).

In terms of domain architecture, Cyclin N-terminal spans 40–170 (ERYANRSLAI…FLELLEFNIH (131 aa)).

It belongs to the cyclin family. Cyclin Y subfamily.

The chain is Putative cyclin-Y-like protein 3 (CCNYL3) from Homo sapiens (Human).